A 755-amino-acid chain; its full sequence is Exocyst complex component 3 (755 aa).

Lysine 38 is modified (N6-acetyllysine).

This sequence belongs to the SEC6 family. The exocyst complex is composed of EXOC1, EXOC2, EXOC3, EXOC4, EXOC5, EXOC6, EXOC7 and EXOC8. Interacts with EXOC3L1. Interacts with BIRC6/bruce. Interacts with MYRIP. Interacts with SLC6A9.

It localises to the cytoplasm. The protein localises to the perinuclear region. Its subcellular location is the cell projection. It is found in the growth cone. The protein resides in the midbody. It localises to the golgi apparatus. The protein localises to the neuron projection. Component of the exocyst complex involved in the docking of exocytic vesicles with fusion sites on the plasma membrane. This is Exocyst complex component 3 (Exoc3) from Mus musculus (Mouse).